A 236-amino-acid chain; its full sequence is Increased recombination centers protein 22-2 (236 aa).

The N-terminal stretch at 1–19 (MKFSAILTALTATIATVAG) is a signal peptide. At 20–161 (YETSGKPHTV…AAVSFFDPRL (142 aa)) the chain is on the lumenal side. Residues 162-182 (IFLELVLLATFGGIAYFVYEI) form a helical membrane-spanning segment. Residues 183–236 (WGKQYLRGTAPVKVPVKKSGSPVAVKEASPVGSASGFDESWIPEAHLKKNKKKA) lie on the Cytoplasmic side of the membrane.

This sequence belongs to the IRC22 family.

The protein resides in the endoplasmic reticulum membrane. Functionally, is probably involved in a pathway contributing to genomic integrity. This Candida tropicalis (strain ATCC MYA-3404 / T1) (Yeast) protein is Increased recombination centers protein 22-2 (IRC22-2).